Here is a 498-residue protein sequence, read N- to C-terminus: ATP synthase subunit beta, chloroplastic (498 aa).

172-179 (GGAGVGKT) contacts ATP.

Belongs to the ATPase alpha/beta chains family. F-type ATPases have 2 components, CF(1) - the catalytic core - and CF(0) - the membrane proton channel. CF(1) has five subunits: alpha(3), beta(3), gamma(1), delta(1), epsilon(1). CF(0) has four main subunits: a(1), b(1), b'(1) and c(9-12).

The protein localises to the plastid. It localises to the chloroplast thylakoid membrane. It carries out the reaction ATP + H2O + 4 H(+)(in) = ADP + phosphate + 5 H(+)(out). Produces ATP from ADP in the presence of a proton gradient across the membrane. The catalytic sites are hosted primarily by the beta subunits. The protein is ATP synthase subunit beta, chloroplastic of Calamus usitatus (Palm tree).